An 804-amino-acid polypeptide reads, in one-letter code: Leucine--tRNA ligase (804 aa).

A 'HIGH' region motif is present at residues 40-51 (PYPSGAGLHVGH). Positions 576-580 (KMSKS) match the 'KMSKS' region motif. Lysine 579 lines the ATP pocket.

This sequence belongs to the class-I aminoacyl-tRNA synthetase family.

It is found in the cytoplasm. The enzyme catalyses tRNA(Leu) + L-leucine + ATP = L-leucyl-tRNA(Leu) + AMP + diphosphate. In Staphylococcus haemolyticus (strain JCSC1435), this protein is Leucine--tRNA ligase.